We begin with the raw amino-acid sequence, 124 residues long: Small ribosomal subunit protein uS12 (124 aa).

At aspartate 89 the chain carries 3-methylthioaspartic acid.

This sequence belongs to the universal ribosomal protein uS12 family. Part of the 30S ribosomal subunit. Contacts proteins S8 and S17. May interact with IF1 in the 30S initiation complex.

With S4 and S5 plays an important role in translational accuracy. In terms of biological role, interacts with and stabilizes bases of the 16S rRNA that are involved in tRNA selection in the A site and with the mRNA backbone. Located at the interface of the 30S and 50S subunits, it traverses the body of the 30S subunit contacting proteins on the other side and probably holding the rRNA structure together. The combined cluster of proteins S8, S12 and S17 appears to hold together the shoulder and platform of the 30S subunit. The polypeptide is Small ribosomal subunit protein uS12 (Shewanella baltica (strain OS223)).